A 334-amino-acid chain; its full sequence is MTKPIVFSGAQPSGELTIGNYMGALRQWVNMQDDYHCIYCIVDQHAITVRQDAQKLRKATLDTLALYLACGIDPEKSTIFVQSHVPEHAQLGWALNCYTYFGELSRMTQFKDKSARYAENINAGLFDYPVLMAADILLYQTNLVPVGEDQKQHLELSRDIAQRFNALYGEIFKVPEPFIPKSGARVMSLLEPTKKMSKSDDNRNNVIGLLEDPKSVVKKIKRAVTDSDEPPVVRYDVQNKAGVSNLLDILSAVTGQSIPELEKQFEGKMYGHLKGEVADAVSGMLTELQERYHRFRNDEAFLQQVMKDGAEKASAHASRTLKAVYEAIGFVAKP.

ATP contacts are provided by residues 11 to 13 (QPS) and 19 to 20 (GN). Positions 12-20 (PSGELTIGN) match the 'HIGH' region motif. D135 serves as a coordination point for L-tryptophan. Residues 147 to 149 (GED), V186, and 195 to 199 (KMSKS) contribute to the ATP site. Residues 195–199 (KMSKS) carry the 'KMSKS' region motif.

Belongs to the class-I aminoacyl-tRNA synthetase family. Homodimer.

The protein localises to the cytoplasm. It carries out the reaction tRNA(Trp) + L-tryptophan + ATP = L-tryptophyl-tRNA(Trp) + AMP + diphosphate + H(+). Functionally, catalyzes the attachment of tryptophan to tRNA(Trp). Amino acylates tRNA(Trp) with both L- and D-tryptophan, although D-tryptophan is a poor substrate. In Escherichia coli (strain K12), this protein is Tryptophan--tRNA ligase.